The primary structure comprises 278 residues: MPELPEVETVARSLAPQLQGRTITGLAKLDWPKMLTPSPDEFAALIAGRRIEAIGRRAKWLLLSLDGEWTLAIHLRMSGQLLVAEPETSEARHVHFALDLDNGRRLIFNDQRKFGRVHLLDRQGLAALDAVHGPEPLAADFTPSALAERLQNRRAPIKALLLDQHLIAGIGNIYANEALWLARIHPLTPGAMLTPEQINELHHAIRHVLQEAITNQGSSLRNYRDGYGRQGTQQEHFNVYDRAGEPCPRCQSTIERIVVAQRSTYFCPTCQITMQQPE.

The active-site Schiff-base intermediate with DNA is P2. E3 functions as the Proton donor in the catalytic mechanism. K59 serves as the catalytic Proton donor; for beta-elimination activity. Residues H93, R112, and R153 each contribute to the DNA site. The FPG-type zinc-finger motif lies at 238-272; the sequence is NVYDRAGEPCPRCQSTIERIVVAQRSTYFCPTCQI. R262 serves as the catalytic Proton donor; for delta-elimination activity.

Belongs to the FPG family. As to quaternary structure, monomer. Zn(2+) serves as cofactor.

It catalyses the reaction Hydrolysis of DNA containing ring-opened 7-methylguanine residues, releasing 2,6-diamino-4-hydroxy-5-(N-methyl)formamidopyrimidine.. The catalysed reaction is 2'-deoxyribonucleotide-(2'-deoxyribose 5'-phosphate)-2'-deoxyribonucleotide-DNA = a 3'-end 2'-deoxyribonucleotide-(2,3-dehydro-2,3-deoxyribose 5'-phosphate)-DNA + a 5'-end 5'-phospho-2'-deoxyribonucleoside-DNA + H(+). Its function is as follows. Involved in base excision repair of DNA damaged by oxidation or by mutagenic agents. Acts as a DNA glycosylase that recognizes and removes damaged bases. Has a preference for oxidized purines, such as 7,8-dihydro-8-oxoguanine (8-oxoG). Has AP (apurinic/apyrimidinic) lyase activity and introduces nicks in the DNA strand. Cleaves the DNA backbone by beta-delta elimination to generate a single-strand break at the site of the removed base with both 3'- and 5'-phosphates. This chain is Formamidopyrimidine-DNA glycosylase, found in Chloroflexus aurantiacus (strain ATCC 29366 / DSM 635 / J-10-fl).